We begin with the raw amino-acid sequence, 183 residues long: RFKKIRRLGALPGLTSKRPRSGSDLKNQLRSGKRSQYRIRLEEKQKLRFHYGLTERQLLKYVHIAGKAKGSTGQILLQLLEMRLDNILFRLGMASTIPGARQLVNHRHILVNGRIVDIPSYRCKPRDIITTKNKQRSKALIQNFIASSPHQEELPNHLTIDPLQYKGLVNQIIDSKWIGLKIN.

The 62-residue stretch at 82–143 folds into the S4 RNA-binding domain; that stretch reads MRLDNILFRL…KQRSKALIQN (62 aa).

This sequence belongs to the universal ribosomal protein uS4 family. In terms of assembly, part of the 30S ribosomal subunit. Contacts protein S5. The interaction surface between S4 and S5 is involved in control of translational fidelity.

It is found in the plastid. Its subcellular location is the chloroplast. Functionally, one of the primary rRNA binding proteins, it binds directly to 16S rRNA where it nucleates assembly of the body of the 30S subunit. In terms of biological role, with S5 and S12 plays an important role in translational accuracy. This Sparaxis sp. (strain Lejeune 1997) protein is Small ribosomal subunit protein uS4c (rps4).